A 149-amino-acid chain; its full sequence is Large ribosomal subunit protein bL9 (149 aa).

It belongs to the bacterial ribosomal protein bL9 family.

Binds to the 23S rRNA. The protein is Large ribosomal subunit protein bL9 of Buchnera aphidicola subsp. Cinara cedri (strain Cc).